The primary structure comprises 271 residues: Urease accessory protein UreD (271 aa).

This sequence belongs to the UreD family. UreD, UreF and UreG form a complex that acts as a GTP-hydrolysis-dependent molecular chaperone, activating the urease apoprotein by helping to assemble the nickel containing metallocenter of UreC. The UreE protein probably delivers the nickel.

The protein localises to the cytoplasm. In terms of biological role, required for maturation of urease via the functional incorporation of the urease nickel metallocenter. This is Urease accessory protein UreD from Haemophilus influenzae (strain PittGG).